A 214-amino-acid polypeptide reads, in one-letter code: Clavatol biosynthesis cluster protein B (214 aa).

A signal peptide spans 1-17; the sequence is MAALSFQCLCVASAVRA. Residues Asn-103 and Asn-204 are each glycosylated (N-linked (GlcNAc...) asparagine).

It functions in the pathway secondary metabolite biosynthesis. Functionally, part of the cla gene cluster that produces clavatol and ortho-quinone methide. The clavatol biosynthesis cluster cla and the terrestric acid cluster tra are both involved in the production of peniphenones and penilactones. The non-reducing PKS claF is responsible for the formation of clavatol from successive condensations of 3 malonyl-CoA units, presumably with a simple acetyl-CoA starter unit, and 2 methylation steps. The esterase claE probably collaborates with claF by catalyzing the hydrolysis of ACP-bound acyl intermediates to free the ACP from stalled intermediates. The clavatol oxidase claD then converts clavatol to hydroxyclavatol. Spontaneous dehydration of hydroxyclavatol leads to the accumulation of the highly active ortho-quinone methide. On the other hand, the PKS-NRPS hybrid traA is involved in the formation of crustosic acid, with the help of traB and traD. The polyketide synthase module (PKS) of traA is responsible for the synthesis of the polyketide backbone via the condensation of an acetyl-CoA starter unit with 3 malonyl-CoA units. The downstream nonribosomal peptide synthetase (NRPS) module then amidates the carboxyl end of the polyketide with L-malic acid. Because traA lacks a designated enoylreductase (ER) domain, the required activity is provided the enoyl reductase traG. Crustosic acid undergoes decarboxylation and isomerization to the terrestric acid, catalyzed by the 2-oxoglutarate-dependent dioxygenase traH. Both acids are further converted to the 2 gamma-butyrolactones (R)-5-methyltetronic acid and (S)-5-carboxylmethyltetronic acid, with involvement of the cytochrome P450 monooxygenase claJ. Spontaneous addition of the methide to these gamma-butyrolactones leads to peniphenone D and penilactone D, which undergo again stereospecific attacking by methide to give penilactones A and B. The function of claB has not been investigated yet. This chain is Clavatol biosynthesis cluster protein B, found in Penicillium crustosum (Blue mold fungus).